A 128-amino-acid chain; its full sequence is MSGRGKQGGKARAKAKTRSSRAGLQFPVGRVHRLLRKGNYAERVGAGAPVYLAAVLEYLTAEILELAGNAARDNKKTRIIPRHLQLAIRNDEELNKLLGKVTIAQGGVLPNIQAVLLPKKTESHHKTK.

The tract at residues 1 to 22 (MSGRGKQGGKARAKAKTRSSRA) is disordered. Ser2 carries the N-acetylserine modification. A Phosphoserine; by RPS6KA5 modification is found at Ser2. Arg4 bears the Citrulline; alternate mark. The residue at position 4 (Arg4) is a Symmetric dimethylarginine; by PRMT5; alternate. The residue at position 6 (Lys6) is an N6-(2-hydroxyisobutyryl)lysine. The span at 7–19 (QGGKARAKAKTRS) shows a compositional bias: basic residues. Lys10 carries the N6-(2-hydroxyisobutyryl)lysine; alternate modification. An N6-(beta-hydroxybutyryl)lysine; alternate mark is found at Lys10 and Lys14. Lys10 bears the N6-lactoyllysine; alternate mark. The residue at position 10 (Lys10) is an N6-succinyllysine; alternate. Lys14 is covalently cross-linked (Glycyl lysine isopeptide (Lys-Gly) (interchain with G-Cter in ubiquitin); alternate). Lys16 participates in a covalent cross-link: Glycyl lysine isopeptide (Lys-Gly) (interchain with G-Cter in ubiquitin). Residue Lys37 is modified to N6-(2-hydroxyisobutyryl)lysine; alternate. Lys37 is modified (N6-(beta-hydroxybutyryl)lysine; alternate). Residue Lys37 is modified to N6-crotonyllysine; alternate. Lys75 and Lys76 each carry N6-(2-hydroxyisobutyryl)lysine. An N6-(2-hydroxyisobutyryl)lysine; alternate modification is found at Lys96. Lys96 is subject to N6-(beta-hydroxybutyryl)lysine; alternate. Lys96 carries the post-translational modification N6-succinyllysine; alternate. Lys96 is subject to N6-glutaryllysine; alternate. Lys100 is subject to N6-glutaryllysine. An N5-methylglutamine modification is found at Gln105. Lys119 carries the N6-(2-hydroxyisobutyryl)lysine; alternate modification. The residue at position 119 (Lys119) is an N6-(beta-hydroxybutyryl)lysine; alternate. N6-crotonyllysine; alternate occurs at positions 119 and 120. N6-glutaryllysine; alternate is present on residues Lys119 and Lys120. Lys120 participates in a covalent cross-link: Glycyl lysine isopeptide (Lys-Gly) (interchain with G-Cter in ubiquitin); alternate. Thr121 carries the phosphothreonine; by DCAF1 modification. Lys126 is subject to N6-crotonyllysine; alternate. Lys126 is modified (N6-glutaryllysine; alternate).

It belongs to the histone H2A family. In terms of assembly, the nucleosome is a histone octamer containing two molecules each of H2A, H2B, H3 and H4 assembled in one H3-H4 heterotetramer and two H2A-H2B heterodimers. The octamer wraps approximately 147 bp of DNA. Deiminated on Arg-4 in granulocytes upon calcium entry. Post-translationally, monoubiquitination of Lys-120 (H2AK119Ub) by RING1, TRIM37 and RNF2/RING2 complex gives a specific tag for epigenetic transcriptional repression and participates in X chromosome inactivation of female mammals. It is involved in the initiation of both imprinted and random X inactivation. Ubiquitinated H2A is enriched in inactive X chromosome chromatin. Ubiquitination of H2A functions downstream of methylation of 'Lys-27' of histone H3 (H3K27me). H2AK119Ub by RNF2/RING2 can also be induced by ultraviolet and may be involved in DNA repair. Monoubiquitination of Lys-120 (H2AK119Ub) by TRIM37 may promote transformation of cells in a number of breast cancers. Following DNA double-strand breaks (DSBs), it is ubiquitinated through 'Lys-63' linkage of ubiquitin moieties by the E2 ligase UBE2N and the E3 ligases RNF8 and RNF168, leading to the recruitment of repair proteins to sites of DNA damage. Ubiquitination at Lys-14 and Lys-16 (H2AK13Ub and H2AK15Ub, respectively) in response to DNA damage is initiated by RNF168 that mediates monoubiquitination at these 2 sites, and 'Lys-63'-linked ubiquitin are then conjugated to monoubiquitin; RNF8 is able to extend 'Lys-63'-linked ubiquitin chains in vitro. Deubiquitinated by USP51 at Lys-14 and Lys-16 (H2AK13Ub and H2AK15Ub, respectively) after damaged DNA is repaired. H2AK119Ub and ionizing radiation-induced 'Lys-63'-linked ubiquitination (H2AK13Ub and H2AK15Ub) are distinct events. In terms of processing, phosphorylation on Ser-2 (H2AS1ph) is enhanced during mitosis. Phosphorylation on Ser-2 by RPS6KA5/MSK1 directly represses transcription. Acetylation of H3 inhibits Ser-2 phosphorylation by RPS6KA5/MSK1. Phosphorylation at Thr-121 (H2AT120ph) by DCAF1 is present in the regulatory region of many tumor suppresor genes and down-regulates their transcription. Glutamine methylation at Gln-105 (H2AQ104me) by FBL is specifically dedicated to polymerase I. It is present at 35S ribosomal DNA locus and impairs binding of the FACT complex. Post-translationally, symmetric dimethylation on Arg-4 by the PRDM1/PRMT5 complex may play a crucial role in the germ-cell lineage. In terms of processing, crotonylation (Kcr) is specifically present in male germ cells and marks testis-specific genes in post-meiotic cells, including X-linked genes that escape sex chromosome inactivation in haploid cells. Crotonylation marks active promoters and enhancers and confers resistance to transcriptional repressors. It is also associated with post-meiotically activated genes on autosomes. Lactylated in macrophages by EP300/P300 by using lactoyl-CoA directly derived from endogenous or exogenous lactate, leading to stimulates gene transcription.

The protein localises to the nucleus. It localises to the chromosome. In terms of biological role, core component of nucleosome. Nucleosomes wrap and compact DNA into chromatin, limiting DNA accessibility to the cellular machineries which require DNA as a template. Histones thereby play a central role in transcription regulation, DNA repair, DNA replication and chromosomal stability. DNA accessibility is regulated via a complex set of post-translational modifications of histones, also called histone code, and nucleosome remodeling. The sequence is that of Histone H2A type 1-J from Homo sapiens (Human).